The chain runs to 218 residues: Ribose-5-phosphate isomerase A (218 aa).

Substrate is bound by residues 27–30, 80–83, and 93–96; these read TGST, DGAD, and KGGG. Catalysis depends on E102, which acts as the Proton acceptor. K120 is a binding site for substrate.

It belongs to the ribose 5-phosphate isomerase family. In terms of assembly, homodimer.

It carries out the reaction aldehydo-D-ribose 5-phosphate = D-ribulose 5-phosphate. The protein operates within carbohydrate degradation; pentose phosphate pathway; D-ribose 5-phosphate from D-ribulose 5-phosphate (non-oxidative stage): step 1/1. Functionally, catalyzes the reversible conversion of ribose-5-phosphate to ribulose 5-phosphate. In Thiobacillus denitrificans (strain ATCC 25259 / T1), this protein is Ribose-5-phosphate isomerase A.